Reading from the N-terminus, the 432-residue chain is Adenylosuccinate synthetase (432 aa).

GTP is bound by residues 13-19 (GDEGKGK) and 41-43 (GHT). Catalysis depends on D14, which acts as the Proton acceptor. The Mg(2+) site is built by D14 and G41. IMP-binding positions include 14-17 (DEGK), 39-42 (NAGH), T130, R144, Q225, T240, and R304. The Proton donor role is filled by H42. Residue 300–306 (ATTGRRR) coordinates substrate. Residues R306, 332–334 (KLD), and 415–417 (STG) contribute to the GTP site.

The protein belongs to the adenylosuccinate synthetase family. Homodimer. Mg(2+) serves as cofactor.

The protein localises to the cytoplasm. It carries out the reaction IMP + L-aspartate + GTP = N(6)-(1,2-dicarboxyethyl)-AMP + GDP + phosphate + 2 H(+). Its pathway is purine metabolism; AMP biosynthesis via de novo pathway; AMP from IMP: step 1/2. In terms of biological role, plays an important role in the de novo pathway of purine nucleotide biosynthesis. Catalyzes the first committed step in the biosynthesis of AMP from IMP. The sequence is that of Adenylosuccinate synthetase from Escherichia coli (strain K12).